We begin with the raw amino-acid sequence, 270 residues long: Orotidine 5'-phosphate decarboxylase (270 aa).

Residue K89 is the Proton donor of the active site.

The protein belongs to the OMP decarboxylase family. Type 2 subfamily.

The catalysed reaction is orotidine 5'-phosphate + H(+) = UMP + CO2. Its pathway is pyrimidine metabolism; UMP biosynthesis via de novo pathway; UMP from orotate: step 2/2. This chain is Orotidine 5'-phosphate decarboxylase, found in Dehalococcoides mccartyi (strain CBDB1).